Consider the following 299-residue polypeptide: KATNB1-like protein 1 (299 aa).

A Nuclear localization signal motif is present at residues 8–15 (VKKRNFSN). Ser-56 is modified (phosphoserine).

In terms of assembly, interacts with KATNA1 and KATNAL1; these interactions are competed by KATNB1 which has a higher affinity for them.

It is found in the nucleus. It localises to the cytoplasm. The protein resides in the cytoskeleton. The protein localises to the spindle pole. Its function is as follows. Regulates microtubule-severing activity of KATNAL1 in a concentration-dependent manner in vitro. The chain is KATNB1-like protein 1 (Katnbl1) from Mus musculus (Mouse).